We begin with the raw amino-acid sequence, 472 residues long: Protein translocase subunit SecD (472 aa).

6 helical membrane passes run 8-28 (ILFT…PLSG), 300-320 (TIIN…IIFY), 325-347 (VIAD…WTGA), 353-375 (GIAG…YERI), 396-416 (VFST…VLFF), and 424-444 (GFAV…LVVS).

This sequence belongs to the SecD/SecF family. SecD subfamily. As to quaternary structure, forms a complex with SecF. Part of the essential Sec protein translocation apparatus which comprises SecA, SecYEG and auxiliary proteins SecDF. Other proteins may also be involved.

It localises to the cell inner membrane. Part of the Sec protein translocase complex. Interacts with the SecYEG preprotein conducting channel. SecDF uses the proton motive force (PMF) to complete protein translocation after the ATP-dependent function of SecA. This Petrotoga mobilis (strain DSM 10674 / SJ95) protein is Protein translocase subunit SecD.